A 461-amino-acid polypeptide reads, in one-letter code: MQRTQIVDALAATAPQPVIRLCGWVRTRRDAKGFSFLEINDGSCLANIQAIVDEGIPAYANIGAVSTGAAVDITGELVESPGKGQKWEVRVQTLTLLGAADAETYPLQKKRHSDEFLRSIAHLRARTNKYGAAFRIRSEAAFAIHEFYRERGFFYVHTPILTGSDCEGAGEMFRVTTLPVEGSPTPASGNRYENDFFGKECNLTVSGQLEAETLALGLGKVYTFGPTFRAENSNTPRHAAEFWMIEPEVAFADLEEDMNLAEDMTRTVVRRILDRCAADLDLFNRFVDTTLVERLRQIADEPFARCSYTEAIELLLKSGKKFEYPVSFGLDLQTEHERYLAEEHFGKPVIVYNYPKEIKAFYMRLNDDGRTVAAMDVLVPRIGELIGGSQREERLDVLEARINEMGQNLEDYWWYLDLRRFGSVPHAGFGMGFERLLMLLTGITNIRDVIPFPRTPGNLEF.

Belongs to the class-II aminoacyl-tRNA synthetase family. Homodimer.

The protein resides in the cytoplasm. It carries out the reaction tRNA(Asn) + L-asparagine + ATP = L-asparaginyl-tRNA(Asn) + AMP + diphosphate + H(+). This is Asparagine--tRNA ligase from Nitratidesulfovibrio vulgaris (strain DP4) (Desulfovibrio vulgaris).